Consider the following 93-residue polypeptide: Small ribosomal subunit protein uS19 (93 aa).

Residues 1–23 are disordered; that stretch reads MPRSLKKGPFVDDHLQKKVDAEN. Residues 9 to 23 are compositionally biased toward basic and acidic residues; it reads PFVDDHLQKKVDAEN.

The protein belongs to the universal ribosomal protein uS19 family.

Protein S19 forms a complex with S13 that binds strongly to the 16S ribosomal RNA. The protein is Small ribosomal subunit protein uS19 of Nocardioides sp. (strain ATCC BAA-499 / JS614).